A 616-amino-acid chain; its full sequence is Electron transfer flavoprotein-ubiquinone oxidoreductase, mitochondrial (616 aa).

A mitochondrion-targeting transit peptide spans 1-32; that stretch reads MLVRLTKLSCPAYHWFHALKIKKCLPLCAPRC. 70-84 is a binding site for FAD; sequence VVIVGAGPAGLSAAI. An N6-acetyllysine modification is found at lysine 95. An intramembrane segment occupies 108 to 129; sequence IGAHTLSGACLDPAAFKELFPD. N6-acetyllysine is present on residues lysine 131 and lysine 222. Glycine 304 and glycine 305 together coordinate a ubiquinone. 2 positions are modified to N6-acetyllysine: lysine 356 and lysine 415. An intramembrane segment occupies 427-446; it reads TGLHVTEYEDNLKQSWVWKE. The residue at position 550 (serine 550) is a Phosphoserine. The [4Fe-4S] cluster site is built by cysteine 560, cysteine 585, cysteine 588, and cysteine 591. The 4Fe-4S ferredoxin-type domain occupies 576 to 605; it reads FRLQINAQNCVHCKTCDIKDPSQNINWVVP.

This sequence belongs to the ETF-QO/FixC family. Monomer. [4Fe-4S] cluster is required as a cofactor. FAD serves as cofactor. In terms of processing, acetylation of Lys-95 and Lys-222 is observed in liver mitochondria from fasted mice but not from fed mice.

The protein localises to the mitochondrion inner membrane. It catalyses the reaction a ubiquinone + reduced [electron-transfer flavoprotein] = a ubiquinol + oxidized [electron-transfer flavoprotein] + H(+). Its function is as follows. Accepts electrons from ETF and reduces ubiquinone. The sequence is that of Electron transfer flavoprotein-ubiquinone oxidoreductase, mitochondrial (Etfdh) from Mus musculus (Mouse).